A 429-amino-acid chain; its full sequence is MNKPEIMTQTDIAGPAPRHQTTKVMVGNVAVGGGAPIVVQSMTNTDTADVESTVAQVAALARAGSEMVRITVDREEAAAAVPHIREQLDKRGITTPLIGDFHYIGHKLLTDYPACAEALAKYRINPGNVGFKDKRDTQFSTIIELANKYGKPVRIGANWGSLDQELLSKLMDENAASATPRDARAVTREAMVQSALLSAARAQELGMPKDRIILSAKVSAVQDLIAVYQDLAARSDYAIHLGLTEAGMGSKGIVASSAALGILLQQGIGDTIRISLTPEPGGDRTLEVQVAQELLQTMGFRTFVPLVAACPGCGRTTSTTFQELARSIQDFIREEMPAWKSKYPGVENLNVAVMGCIVNGPGESKHANIGISLPGTGEAPAAPVFVDGKKFRTLRGPTIAADFKALVIDYIDQRYGSGAKAPESVTAAE.

Residues Cys-310, Cys-313, Cys-356, and Glu-363 each coordinate [4Fe-4S] cluster.

Belongs to the IspG family. [4Fe-4S] cluster serves as cofactor.

The enzyme catalyses (2E)-4-hydroxy-3-methylbut-2-enyl diphosphate + oxidized [flavodoxin] + H2O + 2 H(+) = 2-C-methyl-D-erythritol 2,4-cyclic diphosphate + reduced [flavodoxin]. The protein operates within isoprenoid biosynthesis; isopentenyl diphosphate biosynthesis via DXP pathway; isopentenyl diphosphate from 1-deoxy-D-xylulose 5-phosphate: step 5/6. In terms of biological role, converts 2C-methyl-D-erythritol 2,4-cyclodiphosphate (ME-2,4cPP) into 1-hydroxy-2-methyl-2-(E)-butenyl 4-diphosphate. This is 4-hydroxy-3-methylbut-2-en-1-yl diphosphate synthase (flavodoxin) from Bradyrhizobium sp. (strain BTAi1 / ATCC BAA-1182).